The primary structure comprises 163 residues: uncharacterized protein (163 aa).

2 consecutive transmembrane segments (helical) span residues 7–27 (YLNE…CYIV) and 51–71 (LVIF…LVWF).

It is found in the cell membrane. This is an uncharacterized protein from Rickettsia prowazekii (strain Madrid E).